A 160-amino-acid chain; its full sequence is Cell division protein SepF (160 aa).

Residues Ala18 to Thr30 are compositionally biased toward acidic residues. Positions Ala18–Ile72 are disordered. A compositionally biased stretch (low complexity) spans Pro45–Pro57.

The protein belongs to the SepF family. As to quaternary structure, homodimer. Interacts with FtsZ.

It is found in the cytoplasm. Functionally, cell division protein that is part of the divisome complex and is recruited early to the Z-ring. Probably stimulates Z-ring formation, perhaps through the cross-linking of FtsZ protofilaments. Its function overlaps with FtsA. The sequence is that of Cell division protein SepF from Bifidobacterium adolescentis (strain ATCC 15703 / DSM 20083 / NCTC 11814 / E194a).